A 51-amino-acid polypeptide reads, in one-letter code: Insulin (51 aa).

Intrachain disulfides connect C7-C37, C19-C50, and C36-C41.

This sequence belongs to the insulin family. In terms of assembly, heterodimer of a B chain and an A chain linked by two disulfide bonds.

It localises to the secreted. Functionally, insulin decreases blood glucose concentration. It increases cell permeability to monosaccharides, amino acids and fatty acids. It accelerates glycolysis, the pentose phosphate cycle, and glycogen synthesis in liver. The sequence is that of Insulin (INS) from Capra hircus (Goat).